The primary structure comprises 155 residues: DNA gyrase inhibitor (155 aa).

This sequence belongs to the DNA gyrase inhibitor family. As to quaternary structure, interacts with DNA gyrase.

The protein resides in the cytoplasm. Inhibits the supercoiling activity of DNA gyrase. Acts by inhibiting DNA gyrase at an early step, prior to (or at the step of) binding of DNA by the gyrase. It protects cells against toxins that target DNA gyrase, by inhibiting activity of these toxins and reducing the formation of lethal double-strand breaks in the cell. This chain is DNA gyrase inhibitor, found in Erwinia billingiae (strain Eb661).